Here is a 611-residue protein sequence, read N- to C-terminus: Beta-hexosaminidase (611 aa).

This sequence belongs to the glycosyl hydrolase 20 family. In terms of assembly, homodimer.

It localises to the periplasm. It carries out the reaction Hydrolysis of terminal non-reducing N-acetyl-D-hexosamine residues in N-acetyl-beta-D-hexosaminides.. It functions in the pathway glycan degradation; chitin degradation. Its activity is regulated as follows. Inhibited by mercuric ions, PNP-beta-Glc, PNP-beta-Gal, PNP-alpha-GlcNAc, and PNP-beta-S-GlcNAc. Its function is as follows. Hydrolyzes aryl-N-acetyl-beta-D-glucosaminide (aryl-beta-GlcNAc), aryl-beta-GalNAc and chitin oligosaccharides. Can hydrolyze rapidly the artificial substrates p-nitrophenyl-N-acetyl-beta-D-glucosaminide (PNP-beta-GlcNAc) and 4-methylumbelliferyl-beta-GlcNAc, and is slightly active on p-nitrophenyl-beta-GalNAc. This enzyme is not processive, i.e. when it hydrolyzes (GlcNAc)n, both products, (Glc-NAc)n-1 and the terminal GlcNAc, are released before the enzyme attacks a second molecule of (GlcNAc)n or (GlcNAc)n-1. The sequence is that of Beta-hexosaminidase from Vibrio furnissii.